A 303-amino-acid chain; its full sequence is 2-dehydropantoate 2-reductase (303 aa).

NADP(+) is bound by residues 7 to 12 (GPGSLG), Lys-78, Asn-103, and Ala-129. Catalysis depends on Lys-185, which acts as the Proton donor. Residues Lys-185, Asn-189, Asn-193, Asn-203, and 252 to 255 (NESS) each bind substrate. Glu-267 is a binding site for NADP(+).

Belongs to the ketopantoate reductase family.

It localises to the cytoplasm. It carries out the reaction (R)-pantoate + NAD(+) = 2-dehydropantoate + NADH + H(+). The enzyme catalyses (R)-pantoate + NADP(+) = 2-dehydropantoate + NADPH + H(+). Its pathway is cofactor biosynthesis; coenzyme A biosynthesis. In terms of biological role, catalyzes the NAD(P)H-dependent reduction of ketopantoate into pantoic acid. The sequence is that of 2-dehydropantoate 2-reductase from Halobacterium salinarum (strain ATCC 700922 / JCM 11081 / NRC-1) (Halobacterium halobium).